A 248-amino-acid polypeptide reads, in one-letter code: Ribonuclease PH (248 aa).

Residues arginine 93 and 131–133 (GTR) contribute to the phosphate site.

This sequence belongs to the RNase PH family. As to quaternary structure, homohexameric ring arranged as a trimer of dimers.

It carries out the reaction tRNA(n+1) + phosphate = tRNA(n) + a ribonucleoside 5'-diphosphate. Phosphorolytic 3'-5' exoribonuclease that plays an important role in tRNA 3'-end maturation. Removes nucleotide residues following the 3'-CCA terminus of tRNAs; can also add nucleotides to the ends of RNA molecules by using nucleoside diphosphates as substrates, but this may not be physiologically important. Probably plays a role in initiation of 16S rRNA degradation (leading to ribosome degradation) during starvation. This is Ribonuclease PH from Bifidobacterium longum (strain NCC 2705).